A 364-amino-acid polypeptide reads, in one-letter code: MTEKINLFDYTPKALADWFVAQGEQPFRAKQVLKWLYHERVYDFERMTDLSKKLRAMLSEKACVILPQVIADKTARDGTRKWVFQYACTNSIEAVFIPEDDRGTLCISSQAGCALACPFCSTARAGFNRNLTTGEIVVQVWLAKELVHCERNGNSRLITNVVLMGMGEPLINFNQVLPATEIFMSDWGFGLSKRRVTLSTSGVVPAIHKLREVTDLSLAVSLHAPNDELRNKIVPINQRYGLKALIEACALYAENNKQHGGITWEYVMLKGVNDTLEHAQQLADLLRNVPGKINLIPFNEFPNSPFQCSSWEDIVRFQQFLQKAGYIATIRKTRGDDIDAACGQLVGRVNDRIRRERQFQGFKA.

The active-site Proton acceptor is glutamate 93. Residues 99–337 (EDDRGTLCIS…ATIRKTRGDD (239 aa)) form the Radical SAM core domain. The cysteines at positions 106 and 342 are disulfide-linked. 3 residues coordinate [4Fe-4S] cluster: cysteine 113, cysteine 117, and cysteine 120. Residues 167–168 (GE), serine 199, 221–223 (SLH), and asparagine 299 contribute to the S-adenosyl-L-methionine site. Cysteine 342 (S-methylcysteine intermediate) is an active-site residue.

It belongs to the radical SAM superfamily. RlmN family. [4Fe-4S] cluster serves as cofactor.

The protein localises to the cytoplasm. It catalyses the reaction adenosine(2503) in 23S rRNA + 2 reduced [2Fe-2S]-[ferredoxin] + 2 S-adenosyl-L-methionine = 2-methyladenosine(2503) in 23S rRNA + 5'-deoxyadenosine + L-methionine + 2 oxidized [2Fe-2S]-[ferredoxin] + S-adenosyl-L-homocysteine. The enzyme catalyses adenosine(37) in tRNA + 2 reduced [2Fe-2S]-[ferredoxin] + 2 S-adenosyl-L-methionine = 2-methyladenosine(37) in tRNA + 5'-deoxyadenosine + L-methionine + 2 oxidized [2Fe-2S]-[ferredoxin] + S-adenosyl-L-homocysteine. Functionally, specifically methylates position 2 of adenine 2503 in 23S rRNA and position 2 of adenine 37 in tRNAs. m2A2503 modification seems to play a crucial role in the proofreading step occurring at the peptidyl transferase center and thus would serve to optimize ribosomal fidelity. In Dichelobacter nodosus (strain VCS1703A), this protein is Dual-specificity RNA methyltransferase RlmN.